The chain runs to 219 residues: Ion-translocating oxidoreductase complex subunit G (219 aa).

The helical transmembrane segment at Gly25–Ala45 threads the bilayer. FMN phosphoryl threonine is present on Thr187.

It belongs to the RnfG family. As to quaternary structure, the complex is composed of six subunits: RnfA, RnfB, RnfC, RnfD, RnfE and RnfG. Requires FMN as cofactor.

The protein localises to the cellular chromatophore membrane. In terms of biological role, part of a membrane-bound complex that couples electron transfer with translocation of ions across the membrane. This Cereibacter sphaeroides (strain ATCC 17029 / ATH 2.4.9) (Rhodobacter sphaeroides) protein is Ion-translocating oxidoreductase complex subunit G.